A 690-amino-acid chain; its full sequence is MPRVHAIEDYRNFGIMAHIDAGKTTTTERILFYTGKSHKIGEVHEGAATMDWMAQEQERGITITSAATTAFWNGKRLNIIDTPGHVDFTIEVERSLRVLDGAVCVLDSNQGVEPQTETVWRQGDKYRVPRIVFANKMDKTGADFFKCLQDIVDRLGAKPVAIQLPIGSENNFKGLIDLVRMKAVVWNDESLGAKFEDTDIPEDLLEQAKEYREKMIEAAVELDDDAMAAYLDGKEPDEATLKRLIRKAVLNGAFYPVLCGSAFKNKGVQPLLDAVVDYLPSPVDVPAIKGIDEDGNEVVRKADDSEPLALLAFKIMDDPFVGTITFCRIYSGVLQSGTGVVNSTREKKERIGRMLLMHANNREDIKEAYAGDIVALAGLKEARTGDTLCDPAKPVILEKMEFPEPVIEIAIEPKSKADQEKLGVALAKLAAEDPSFRVSTDIESGQTILKGMGELHLDIKVDILKRTYKVDANIGAPQVAFRERITKKAEVDYTHKKQTGGTGQFAAVSFIVEPNEPGAGYEFISKVVGGSVPKEYIPGVEKGIESVLGSGVVAGFPVVDVKVTLVDGKYHDVDSSALAFEIASRAAFREALQKGKSVLLEPIMKVECVTPEDYTGSVIGDLNSRRGQIQGQDMRGNANVINAMVPLMNMFGYVNNLRSMSQGRATFTMQFDHYAEAPANVSAEVQKKFA.

A tr-type G domain is found at 8–283 (EDYRNFGIMA…AVVDYLPSPV (276 aa)). Residues 17 to 24 (AHIDAGKT), 81 to 85 (DTPGH), and 135 to 138 (NKMD) each bind GTP.

The protein belongs to the TRAFAC class translation factor GTPase superfamily. Classic translation factor GTPase family. EF-G/EF-2 subfamily.

Its subcellular location is the cytoplasm. Its function is as follows. Catalyzes the GTP-dependent ribosomal translocation step during translation elongation. During this step, the ribosome changes from the pre-translocational (PRE) to the post-translocational (POST) state as the newly formed A-site-bound peptidyl-tRNA and P-site-bound deacylated tRNA move to the P and E sites, respectively. Catalyzes the coordinated movement of the two tRNA molecules, the mRNA and conformational changes in the ribosome. The polypeptide is Elongation factor G (Rhodopseudomonas palustris (strain HaA2)).